Consider the following 65-residue polypeptide: Ferredoxin soy (65 aa).

One can recognise a 4Fe-4S ferredoxin-type domain in the interval G2 to D29. 3 residues coordinate [3Fe-4S] cluster: C10, C16, and C55.

The cofactor is [3Fe-4S] cluster.

Its function is as follows. Electron transport protein for the cytochrome P-450-SOY system. This is Ferredoxin soy (soyB) from Streptomyces griseus.